We begin with the raw amino-acid sequence, 200 residues long: Phospholipase A2 inhibitor gamma subunit B (200 aa).

The first 19 residues, 1–19 (MKSFLFCCLLGTFLAIGMC), serve as a signal peptide directing secretion. 8 disulfides stabilise this stretch: Cys-22–Cys-46, Cys-25–Cys-32, Cys-39–Cys-67, Cys-73–Cys-94, Cys-95–Cys-100, Cys-120–Cys-145, Cys-138–Cys-165, and Cys-171–Cys-191. Asn-33 is a glycosylation site (N-linked (GlcNAc...) asparagine).

The protein belongs to the CNF-like-inhibitor family. Heterodimer of subunit A and subunit B. In terms of tissue distribution, expressed by the liver.

It is found in the secreted. In terms of biological role, inhibits the enzymatic activity of phospholipase A2 (PA2). The protein is Phospholipase A2 inhibitor gamma subunit B of Gloydius brevicaudus siniticus (Chinese mamushi).